The chain runs to 319 residues: UDP-N-acetylenolpyruvoylglucosamine reductase (319 aa).

The 164-residue stretch at 35–198 (VGGPAEAMFK…TGCVLAGRPD (164 aa)) folds into the FAD-binding PCMH-type domain. Arg-178 is a catalytic residue. Residue Ser-227 is the Proton donor of the active site. The active site involves Glu-302.

It belongs to the MurB family. It depends on FAD as a cofactor.

It is found in the cytoplasm. The enzyme catalyses UDP-N-acetyl-alpha-D-muramate + NADP(+) = UDP-N-acetyl-3-O-(1-carboxyvinyl)-alpha-D-glucosamine + NADPH + H(+). The protein operates within cell wall biogenesis; peptidoglycan biosynthesis. In terms of biological role, cell wall formation. The sequence is that of UDP-N-acetylenolpyruvoylglucosamine reductase from Rhodospirillum rubrum (strain ATCC 11170 / ATH 1.1.1 / DSM 467 / LMG 4362 / NCIMB 8255 / S1).